A 103-amino-acid chain; its full sequence is MYAVFQSGGKQHRVSEGQTVRLEKLDIATGETVEFAEVLMIANGEEVKIGVPFVDGGVIKAEVVAHGRGEKVKIVKFRRRKHYRKQQGHRQWFTDVKITGISA.

This sequence belongs to the bacterial ribosomal protein bL21 family. As to quaternary structure, part of the 50S ribosomal subunit. Contacts protein L20.

Its function is as follows. This protein binds to 23S rRNA in the presence of protein L20. In Escherichia coli O127:H6 (strain E2348/69 / EPEC), this protein is Large ribosomal subunit protein bL21.